Here is a 432-residue protein sequence, read N- to C-terminus: Adenosylhomocysteinase (432 aa).

The interval 1–24 (MSAYSPLSAQLDADTDVDVESTRT) is disordered. Positions 137 and 162 each coordinate substrate. 163–165 (TTT) provides a ligand contact to NAD(+). Substrate is bound by residues K192 and D196. Residues N197, 226 to 231 (GYGYCG), E249, N284, 305 to 307 (AGH), and N352 contribute to the NAD(+) site.

It belongs to the adenosylhomocysteinase family. Requires NAD(+) as cofactor.

Its subcellular location is the cytoplasm. The catalysed reaction is S-adenosyl-L-homocysteine + H2O = L-homocysteine + adenosine. It participates in amino-acid biosynthesis; L-homocysteine biosynthesis; L-homocysteine from S-adenosyl-L-homocysteine: step 1/1. May play a key role in the regulation of the intracellular concentration of adenosylhomocysteine. The sequence is that of Adenosylhomocysteinase from Haloquadratum walsbyi (strain DSM 16790 / HBSQ001).